Reading from the N-terminus, the 120-residue chain is MREKPKYLPPTLRDKNRYIAFQVIGERPFKKDEIKKAVWEASLSALGYLGSARAKPWFIKFDEKSQTGIVRVDRKHVEELRFALTMLTEINGSKVIFRTLGVSGTIKRLKRKFLAEYGWR.

It belongs to the eukaryotic/archaeal RNase P protein component 2 family. Consists of a catalytic RNA component and at least 4-5 protein subunits.

The protein localises to the cytoplasm. It catalyses the reaction Endonucleolytic cleavage of RNA, removing 5'-extranucleotides from tRNA precursor.. Part of ribonuclease P, a protein complex that generates mature tRNA molecules by cleaving their 5'-ends. The protein is Ribonuclease P protein component 2 of Thermococcus kodakarensis (strain ATCC BAA-918 / JCM 12380 / KOD1) (Pyrococcus kodakaraensis (strain KOD1)).